Consider the following 52-residue polypeptide: Stable plasmid inheritance protein (52 aa).

A helical membrane pass occupies residues 6–26 (SSLVWCVLIVCLTLLIFTYLT).

Belongs to the Hok/Gef family.

It localises to the cell inner membrane. In terms of biological role, toxic component of a type I toxin-antitoxin (TA) system. Part of the plasmid maintenance system, encodes a toxic protein that collapses the transmembrane potential and arrests respiration. When the adjacent non-translated flmB (sok) gene is disrupted FlmA no longer functions in plasmid maintenance (i.e. FlmB probably encodes an antisense antitoxin RNA). Translation of FlmA may be coupled to the upstream flmC gene. This is Stable plasmid inheritance protein (flmA) from Escherichia coli O157:H7.